The primary structure comprises 346 residues: Farnesyl diphosphate synthase 1 (346 aa).

Isopentenyl diphosphate-binding residues include Lys52, Arg55, and Gln90. Residues Asp97 and Asp101 each coordinate Mg(2+). Positions Asp97–Asp101 match the DDXXD motif motif. Residue Arg106 coordinates dimethylallyl diphosphate. Isopentenyl diphosphate is bound at residue Arg107. Dimethylallyl diphosphate-binding residues include Lys194, Thr195, and Gln233. A DDXXD motif motif is present at residues Asp236–Asp240. The dimethylallyl diphosphate site is built by Lys250 and Lys259.

Belongs to the FPP/GGPP synthase family. The cofactor is Mg(2+). Mn(2+) is required as a cofactor. In terms of tissue distribution, highly expressed in shoots.

The enzyme catalyses isopentenyl diphosphate + (2E)-geranyl diphosphate = (2E,6E)-farnesyl diphosphate + diphosphate. The catalysed reaction is isopentenyl diphosphate + dimethylallyl diphosphate = (2E)-geranyl diphosphate + diphosphate. The protein operates within isoprenoid biosynthesis; farnesyl diphosphate biosynthesis; farnesyl diphosphate from geranyl diphosphate and isopentenyl diphosphate: step 1/1. It functions in the pathway isoprenoid biosynthesis; geranyl diphosphate biosynthesis; geranyl diphosphate from dimethylallyl diphosphate and isopentenyl diphosphate: step 1/1. Its function is as follows. Catalyzes the sequential condensation of isopentenyl pyrophosphate (IPP) with the allylic pyrophosphates, dimethylallyl pyrophosphate (DMAPP), and then with the resultant geranylpyrophosphate (GPP) to the ultimate product farnesyl pyrophosphate (FPP). Has a 4.5 time greater affinity for GPP versus DMAPP. The sequence is that of Farnesyl diphosphate synthase 1 (FDS-1) from Artemisia spiciformis (Spiked big sagebrush).